The sequence spans 190 residues: Putative manganese efflux pump MntP (190 aa).

The next 6 helical transmembrane spans lie at 5–25 (ALLA…VATG), 41–61 (WHFG…GQGI), 64–84 (FVDA…GLKM), 105–125 (TSLI…GVTL), 127–147 (MLGL…LGLT), and 169–189 (ILGG…SGVF).

The protein belongs to the MntP (TC 9.B.29) family.

It localises to the cell inner membrane. Functionally, probably functions as a manganese efflux pump. This chain is Putative manganese efflux pump MntP, found in Oleidesulfovibrio alaskensis (strain ATCC BAA-1058 / DSM 17464 / G20) (Desulfovibrio alaskensis).